Reading from the N-terminus, the 58-residue chain is Large ribosomal subunit protein uL30 (58 aa).

This sequence belongs to the universal ribosomal protein uL30 family. Part of the 50S ribosomal subunit.

This chain is Large ribosomal subunit protein uL30, found in Buchnera aphidicola subsp. Baizongia pistaciae (strain Bp).